A 482-amino-acid chain; its full sequence is Proline--tRNA ligase (482 aa).

The protein belongs to the class-II aminoacyl-tRNA synthetase family. ProS type 3 subfamily. As to quaternary structure, homodimer.

The protein localises to the cytoplasm. The catalysed reaction is tRNA(Pro) + L-proline + ATP = L-prolyl-tRNA(Pro) + AMP + diphosphate. Functionally, catalyzes the attachment of proline to tRNA(Pro) in a two-step reaction: proline is first activated by ATP to form Pro-AMP and then transferred to the acceptor end of tRNA(Pro). This chain is Proline--tRNA ligase, found in Mycoplasmopsis synoviae (strain 53) (Mycoplasma synoviae).